A 116-amino-acid polypeptide reads, in one-letter code: Anti-sigma F factor antagonist (116 aa).

Residues 3-113 (LAIDLEVKKD…ESEQYALHRL (111 aa)) form the STAS domain. Ser-58 carries the phosphoserine modification.

The protein belongs to the anti-sigma-factor antagonist family. Phosphorylated by SpoIIAB on a serine residue.

In terms of biological role, in the phosphorylated form it could act as an anti-anti-sigma factor that counteracts SpoIIAB and thus releases sigma f from inhibition. This chain is Anti-sigma F factor antagonist (spoIIAA), found in Heyndrickxia coagulans (Weizmannia coagulans).